A 41-amino-acid chain; its full sequence is Photosystem I reaction center subunit IX (41 aa).

The chain crosses the membrane as a helical span at residues 7-27 (YLSSAPILATIWFAITAGILI).

Belongs to the PsaJ family.

It is found in the cellular thylakoid membrane. In terms of biological role, may help in the organization of the PsaE and PsaF subunits. The chain is Photosystem I reaction center subunit IX from Synechococcus sp. (strain ATCC 27144 / PCC 6301 / SAUG 1402/1) (Anacystis nidulans).